Here is a 360-residue protein sequence, read N- to C-terminus: S-adenosylmethionine:tRNA ribosyltransferase-isomerase (360 aa).

The protein belongs to the QueA family. As to quaternary structure, monomer.

The protein localises to the cytoplasm. The catalysed reaction is 7-aminomethyl-7-carbaguanosine(34) in tRNA + S-adenosyl-L-methionine = epoxyqueuosine(34) in tRNA + adenine + L-methionine + 2 H(+). The protein operates within tRNA modification; tRNA-queuosine biosynthesis. Transfers and isomerizes the ribose moiety from AdoMet to the 7-aminomethyl group of 7-deazaguanine (preQ1-tRNA) to give epoxyqueuosine (oQ-tRNA). This is S-adenosylmethionine:tRNA ribosyltransferase-isomerase from Rhodopseudomonas palustris (strain BisB5).